The following is a 198-amino-acid chain: Protein UNCMA_24250 (198 aa).

An AMMECR1 domain is found at 5 to 194 (EDGTLAVKTA…ETEPGGPVIE (190 aa)).

The polypeptide is Protein UNCMA_24250 (Methanocella arvoryzae (strain DSM 22066 / NBRC 105507 / MRE50)).